We begin with the raw amino-acid sequence, 101 residues long: MFVKKGDKVRVIAGKDKGVEALVVTALPKVNKVVVEGVNIVKKHQKPNNENPQGAIVEKEAPIHVSNVQVLDKNGVAGRVGYKFVDGKKVRYNKKSGEVLD.

The protein belongs to the universal ribosomal protein uL24 family. Part of the 50S ribosomal subunit.

One of two assembly initiator proteins, it binds directly to the 5'-end of the 23S rRNA, where it nucleates assembly of the 50S subunit. Functionally, one of the proteins that surrounds the polypeptide exit tunnel on the outside of the subunit. The chain is Large ribosomal subunit protein uL24 from Streptococcus sanguinis (strain SK36).